Here is a 55-residue protein sequence, read N- to C-terminus: uncharacterized protein (55 aa).

A helical transmembrane segment spans residues Leu-24–Ile-46.

The protein localises to the membrane. This is an uncharacterized protein from Dictyostelium discoideum (Social amoeba).